A 275-amino-acid polypeptide reads, in one-letter code: Hemin import ATP-binding protein HmuV (275 aa).

One can recognise an ABC transporter domain in the interval 2–242; that stretch reads LKAAGIGVRL…EWIETGFGLQ (241 aa). Residue 34 to 41 coordinates ATP; sequence GPNGAGKS.

The protein belongs to the ABC transporter superfamily. Heme (hemin) importer (TC 3.A.1.14.5) family. The complex is composed of two ATP-binding proteins (HmuV), two transmembrane proteins (HmuU) and a solute-binding protein (HmuT).

Its subcellular location is the cell inner membrane. In terms of biological role, part of the ABC transporter complex HmuTUV involved in hemin import. Responsible for energy coupling to the transport system. The sequence is that of Hemin import ATP-binding protein HmuV from Gloeobacter violaceus (strain ATCC 29082 / PCC 7421).